A 585-amino-acid chain; its full sequence is Trehalase (585 aa).

Positions 1–32 are cleaved as a signal peptide; the sequence is MAKTTPMAKPSVGLLTLQVLVFCALTGSLASA. Substrate contacts are provided by residues Arg184 and 191 to 192; that span reads WD. Asn207 is a glycosylation site (N-linked (GlcNAc...) asparagine). Substrate contacts are provided by residues Asn228, 237 to 239, 302 to 304, and Gly336; these read RSQ and RPE. The active-site Proton donor/acceptor is the Asp338. N-linked (GlcNAc...) asparagine glycosylation is present at Asn348. Glu535 serves as the catalytic Proton donor/acceptor. Residue Glu550 participates in substrate binding.

Belongs to the glycosyl hydrolase 37 family. As to expression, expressed by the venom gland.

The protein localises to the secreted. The catalysed reaction is alpha,alpha-trehalose + H2O = alpha-D-glucose + beta-D-glucose. This Pimpla hypochondriaca (Parasitoid wasp) protein is Trehalase (tre1).